The chain runs to 265 residues: 3-methyl-2-oxobutanoate hydroxymethyltransferase (265 aa).

The Mg(2+) site is built by D43 and D82. 3-methyl-2-oxobutanoate contacts are provided by residues 43-44, D82, and K111; that span reads DS. E113 is a Mg(2+) binding site. Residue E180 is the Proton acceptor of the active site.

It belongs to the PanB family. In terms of assembly, homodecamer; pentamer of dimers. Mg(2+) is required as a cofactor.

It localises to the cytoplasm. It catalyses the reaction 3-methyl-2-oxobutanoate + (6R)-5,10-methylene-5,6,7,8-tetrahydrofolate + H2O = 2-dehydropantoate + (6S)-5,6,7,8-tetrahydrofolate. Its pathway is cofactor biosynthesis; (R)-pantothenate biosynthesis; (R)-pantoate from 3-methyl-2-oxobutanoate: step 1/2. In terms of biological role, catalyzes the reversible reaction in which hydroxymethyl group from 5,10-methylenetetrahydrofolate is transferred onto alpha-ketoisovalerate to form ketopantoate. In Francisella tularensis subsp. mediasiatica (strain FSC147), this protein is 3-methyl-2-oxobutanoate hydroxymethyltransferase.